The sequence spans 95 residues: Co-chaperonin GroES (95 aa).

The protein belongs to the GroES chaperonin family. As to quaternary structure, heptamer of 7 subunits arranged in a ring. Interacts with the chaperonin GroEL.

It localises to the cytoplasm. Functionally, together with the chaperonin GroEL, plays an essential role in assisting protein folding. The GroEL-GroES system forms a nano-cage that allows encapsulation of the non-native substrate proteins and provides a physical environment optimized to promote and accelerate protein folding. GroES binds to the apical surface of the GroEL ring, thereby capping the opening of the GroEL channel. In Streptococcus uberis (strain ATCC BAA-854 / 0140J), this protein is Co-chaperonin GroES.